A 171-amino-acid polypeptide reads, in one-letter code: NADH-ubiquinone oxidoreductase chain 6 (171 aa).

Transmembrane regions (helical) follow at residues 1–21 (MYVM…ISSK), 25–44 (IYGG…IIMG), 49–71 (FMGL…YTTA), 85–105 (VVIW…VAWM), and 150–170 (WFAA…IEII).

It belongs to the complex I subunit 6 family. In terms of assembly, core subunit of respiratory chain NADH dehydrogenase (Complex I) which is composed of 45 different subunits.

Its subcellular location is the mitochondrion inner membrane. The enzyme catalyses a ubiquinone + NADH + 5 H(+)(in) = a ubiquinol + NAD(+) + 4 H(+)(out). Its function is as follows. Core subunit of the mitochondrial membrane respiratory chain NADH dehydrogenase (Complex I) which catalyzes electron transfer from NADH through the respiratory chain, using ubiquinone as an electron acceptor. Essential for the catalytic activity and assembly of complex I. The polypeptide is NADH-ubiquinone oxidoreductase chain 6 (MT-ND6) (Lemur catta (Ring-tailed lemur)).